Here is a 172-residue protein sequence, read N- to C-terminus: Large ribosomal subunit protein uL10 (172 aa).

The protein belongs to the universal ribosomal protein uL10 family. In terms of assembly, part of the ribosomal stalk of the 50S ribosomal subunit. The N-terminus interacts with L11 and the large rRNA to form the base of the stalk. The C-terminus forms an elongated spine to which L12 dimers bind in a sequential fashion forming a multimeric L10(L12)X complex.

Forms part of the ribosomal stalk, playing a central role in the interaction of the ribosome with GTP-bound translation factors. The sequence is that of Large ribosomal subunit protein uL10 from Clostridium tetani (strain Massachusetts / E88).